Here is a 140-residue protein sequence, read N- to C-terminus: uncharacterized protein (140 aa).

N-linked (GlcNAc...) asparagine glycosylation is present at N36. The helical transmembrane segment at L91–F107 threads the bilayer. Over residues Q113–N122 the composition is skewed to polar residues. The disordered stretch occupies residues Q113 to Q140. Acidic residues predominate over residues T131–Q140.

Its subcellular location is the endoplasmic reticulum membrane. This is an uncharacterized protein from Saccharomyces cerevisiae (strain ATCC 204508 / S288c) (Baker's yeast).